A 173-amino-acid polypeptide reads, in one-letter code: Alpha-crystallin A chain (173 aa).

An N-acetylmethionine modification is found at methionine 1. The required for complex formation with BFSP1 and BFSP2 stretch occupies residues 1 to 63 (MDIAIQHPWF…RTVLDSGISE (63 aa)). Glutamine 6 is modified (deamidated glutamine; partial). Serine 45 bears the Phosphoserine mark. Glutamine 50 carries the deamidated glutamine; partial modification. Residues 52–162 (LFRTVLDSGI…GHSERAIPVS (111 aa)) enclose the sHSP domain. N6-acetyllysine is present on lysine 70. Glutamine 90 carries the deamidated glutamine; partial modification. N6-acetyllysine is present on lysine 99. Zn(2+) is bound at residue histidine 100. Asparagine 101 is modified (deamidated asparagine; partial). Zn(2+)-binding residues include glutamate 102 and histidine 107. A Phosphoserine modification is found at serine 122. A Deamidated asparagine; partial modification is found at asparagine 123. The tract at residues 144–173 (PKVPSGVDAGHSERAIPVSREEKPSSAPSS) is disordered. A compositionally biased stretch (basic and acidic residues) spans 153–167 (GHSERAIPVSREEKP). A Zn(2+)-binding site is contributed by histidine 154. The O-linked (GlcNAc) serine glycan is linked to serine 162.

The protein belongs to the small heat shock protein (HSP20) family. Heteromer composed of three CRYAA and one CRYAB subunits. Inter-subunit bridging via zinc ions enhances stability, which is crucial as there is no protein turn over in the lens. Can also form homodimers and homotetramers (dimers of dimers) which serve as the building blocks of homooligomers. Within homooligomers, the zinc-binding motif is created from residues of 3 different molecules. His-100 and Glu-102 from one molecule are ligands of the zinc ion, and His-107 and His-154 residues from additional molecules complete the site with tetrahedral coordination geometry. Part of a complex required for lens intermediate filament formation composed of BFSP1, BFSP2 and CRYAA. Acetylation at Lys-70 may increase chaperone activity. In terms of processing, undergoes age-dependent proteolytical cleavage at the C-terminus.

The protein localises to the cytoplasm. It localises to the nucleus. In terms of biological role, contributes to the transparency and refractive index of the lens. Acts as a chaperone, preventing aggregation of various proteins under a wide range of stress conditions. Required for the correct formation of lens intermediate filaments as part of a complex composed of BFSP1, BFSP2 and CRYAA. The sequence is that of Alpha-crystallin A chain (CRYAA) from Pteropus poliocephalus (Grey-headed flying fox).